The following is a 468-amino-acid chain: MTQRVRTRFAPSPTGFIHLGNIRSALYPWAFARRMKGDFVLRIEDTDVERSSQEAVDVILEGMAWLGLDIDEGPFYQMQRMDRYREVLAQMVDSGLAYPCYMSTEELDALREAQRERGEKPRYNGFWRPEPGKVLPQPPAGVKPVLRFRNPLDGSVVWDDAVKGRIEISNEELDDLVIARPDGTPTYNFCVVVDDLDMKITHVIRGDDHVNNTPRQINIIRALGGTQPVYAHLPTVLNESGEKMSKRHGAMSVTGYRDEGYLPEAVVNYLARLGWAHGDAEIFSREQFVEWFDLEHLGKSPAQYNPEKLAWLNNHYIKVGDNARLAELTRPFIEALGGKVEGADLVGVIALVKDRANTLKDVAQTALLFYRGEPQADAALKAEHLTPEIQPALKALATQLGALPEWKREAISATFKAVLAEFGLKMPKLAMPVRLLVAGQLQTPSIDAVLELFGREAVLRRIGAGVEA.

The 'HIGH' region signature appears at 11-21 (PSPTGFIHLGN). Positions 243 to 247 (KMSKR) match the 'KMSKS' region motif. Residue Lys-246 coordinates ATP.

The protein belongs to the class-I aminoacyl-tRNA synthetase family. Glutamate--tRNA ligase type 1 subfamily. As to quaternary structure, monomer.

It is found in the cytoplasm. The enzyme catalyses tRNA(Glu) + L-glutamate + ATP = L-glutamyl-tRNA(Glu) + AMP + diphosphate. Catalyzes the attachment of glutamate to tRNA(Glu) in a two-step reaction: glutamate is first activated by ATP to form Glu-AMP and then transferred to the acceptor end of tRNA(Glu). The protein is Glutamate--tRNA ligase of Cupriavidus pinatubonensis (strain JMP 134 / LMG 1197) (Cupriavidus necator (strain JMP 134)).